Here is a 342-residue protein sequence, read N- to C-terminus: tRNA dimethylallyltransferase (342 aa).

An ATP-binding site is contributed by 39–46 (GPTGSGKT). 41–46 (TGSGKT) contacts substrate. Positions 64 to 67 (DSMQ) are interaction with substrate tRNA.

The protein belongs to the IPP transferase family. Monomer. It depends on Mg(2+) as a cofactor.

It carries out the reaction adenosine(37) in tRNA + dimethylallyl diphosphate = N(6)-dimethylallyladenosine(37) in tRNA + diphosphate. Catalyzes the transfer of a dimethylallyl group onto the adenine at position 37 in tRNAs that read codons beginning with uridine, leading to the formation of N6-(dimethylallyl)adenosine (i(6)A). This is tRNA dimethylallyltransferase from Chlamydia felis (strain Fe/C-56) (Chlamydophila felis).